Consider the following 72-residue polypeptide: Delta-actitoxin-Avd2b 3 (72 aa).

The N-terminal stretch at 1–21 (MMSRLLVFLMLGAAFMLVVSA) is a signal peptide. The propeptide occupies 22–42 (NDAYGDEPAFKDLNQGDESLG). Disulfide bonds link C47/C62, C48/C56, and C50/C67.

Belongs to the sea anemone short toxin (type III) family.

The protein resides in the secreted. Its subcellular location is the nematocyst. Voltage-gated sodium channel (Nav) inhibitor. 1 uM completely inhibits insect voltage-gated sodium channel inactivation (DmNav1 from D.melanogaster). The protein is Delta-actitoxin-Avd2b 3 of Anemonia viridis (Snakelocks anemone).